The chain runs to 748 residues: MGQTGKKSEKGPVCWRKRVKSEYMALRQLKKFRRADEVKSMFNTNRQKIMERTEILNQEWKQRRIQPVHIMTTVSSLRGTRECSVTSDLDFPKQVIPLKTLTAVASVPIMYSWSPLQQNFMVEDETVLHNIPYMGDEVLDQDGTFIEELIKNYDGKVHGDRECGFINDEIFVELVNALAQYSDYEDDEDGDDNQDDEQDDTAKDQDDNMEDKETQPLRKFPSDKIFEAISSMFPDKGTSEELKEKYKELTEQQLPGALPPECTPNIDGPNAKSVQREQSLHSFHTLFCRPCFKYDCFLHPFHATPNTYKRKNNEAANDGKPCGPHCYQLLEGAREFAAALTAERIKTPPKRPSGRRRGRLPNNTSRPSTPTVNVSEAKDTDSDREAGTETGGESNDKEEEEKKDETSSSSEANSRCQTPIKMKPNIEPPENVEWSGAEASLFRVLIGTYYDNFCAIARLIGTKTCRQVYEFRVKESSIISPVIAEDVDTPPRKKKRKHRLWAAHCRKIQLKKDGSSNHVYNYQPCDHPRQPCDSSCPCVIAQNFCEKFCQCSSECQNRFPGCRCKAQCNTKQCPCYLAVRECDPDLCLTCGAADHWDSKNVSCKNCSIQRGSKKHLLLAPSDVAGWGIFINDTVQKNEFISEYCGEIISQDEADRRGKVYDKYMCSFLFNLNNDFVVDATRKGNKIRFANHSVNPNCYAKVMMVNGDHRIGIFAKRAIQTGEELFFDYRYSQADALKYVGIEREMEIP.

Residues 184–199 (YEDDEDGDDNQDDEQD) are compositionally biased toward acidic residues. 2 disordered regions span residues 184 to 220 (YEDD…LRKF) and 342 to 428 (AERI…NIEP). The span at 200–220 (DTAKDQDDNMEDKETQPLRKF) shows a compositional bias: basic and acidic residues. Residues 347–359 (TPPKRPSGRRRGR) are compositionally biased toward basic residues. The span at 362–374 (NNTSRPSTPTVNV) shows a compositional bias: polar residues. The segment covering 376–387 (EAKDTDSDREAG) has biased composition (basic and acidic residues). One can recognise a CXC domain in the interval 505 to 607 (CRKIQLKKDG…SKNVSCKNCS (103 aa)). Residues 614 to 729 (KHLLLAPSDV…TGEELFFDYR (116 aa)) enclose the SET domain.

Belongs to the class V-like SAM-binding methyltransferase superfamily. Histone-lysine methyltransferase family. EZ subfamily. As to quaternary structure, component of the prc2/eed-ezh2 complex.

It is found in the nucleus. It catalyses the reaction L-lysyl(27)-[histone H3] + 3 S-adenosyl-L-methionine = N(6),N(6),N(6)-trimethyl-L-lysyl(27)-[histone H3] + 3 S-adenosyl-L-homocysteine + 3 H(+). Polycomb group (PcG) protein. Catalytic subunit of the prc2/eed-ezh2 complex, which methylates 'Lys-9' and 'Lys-27' of histone H3, leading to transcriptional repression of the affected target gene. May repress transcription of the egr2 and en2 genes. May regulate the circadian clock via histone methylation at the promoter of the circadian genes. The chain is Histone-lysine N-methyltransferase EZH2 (ezh2-a) from Xenopus laevis (African clawed frog).